The chain runs to 386 residues: MTKRRVVVGMSGGVDSSVTAWLLKEQGYDVIGLFMKNWEDDDDGEYCSTRQDWIDVVSVADLIGIDVEAVNFAAEYKDRVFAEFLREYSAGRTPNPDVLCNAEIKFKAFLDHAMSLGAETIATGHYARVRERDGRFELLKAFDHTKDQSYFLHRLNQAQLSKTMFPLGEIPKTKVREIAAQIGLPNAKKKDSTGICFIGERPFRDFLNRYLPTQPGPMKTPDGKTVGEHIGLAFYTFGQRKGIGLGGSKDGSGEPWFVAAKDIASNTLYVVQGHDHPWLRSRELVAGNVSWVAGEPPSDGARCGAKTRYRQADAPCAFSSAAPGEAAGGERFSLVFDEPQWAVTPGQSAVLYDGDVCLGGGIIEAAATGRPDAAPASCESALAEAR.

Residues 9–16 (GMSGGVDS) and Met-35 each bind ATP. Positions 95-97 (NPD) are interaction with target base in tRNA. The Nucleophile role is filled by Cys-100. Cys-100 and Cys-196 form a disulfide bridge. Position 124 (Gly-124) interacts with ATP. The tract at residues 146-148 (KDQ) is interaction with tRNA. Residue Cys-196 is the Cysteine persulfide intermediate of the active site. The tract at residues 308-309 (RY) is interaction with tRNA.

It belongs to the MnmA/TRMU family.

The protein resides in the cytoplasm. The enzyme catalyses S-sulfanyl-L-cysteinyl-[protein] + uridine(34) in tRNA + AH2 + ATP = 2-thiouridine(34) in tRNA + L-cysteinyl-[protein] + A + AMP + diphosphate + H(+). Its function is as follows. Catalyzes the 2-thiolation of uridine at the wobble position (U34) of tRNA, leading to the formation of s(2)U34. In Burkholderia thailandensis (strain ATCC 700388 / DSM 13276 / CCUG 48851 / CIP 106301 / E264), this protein is tRNA-specific 2-thiouridylase MnmA.